A 569-amino-acid polypeptide reads, in one-letter code: Protein AF-9 (569 aa).

Residues 1–138 (MASSCAVQVK…EDFRRKLLKA (138 aa)) enclose the YEATS domain. The disordered stretch occupies residues 138–476 (AGGDPNRSIH…PPPPLLKTNN (339 aa)). Residues 149 to 190 (SSSSSSSSSSSSSSSSSSSSSSSSSSSSSSSSSSSSSSSSSS) are compositionally biased toward low complexity. The span at 202-265 (EHKEKPSKDS…PKPMSKEPKA (64 aa)) shows a compositional bias: basic and acidic residues. Phosphoserine is present on residues serine 289 and serine 295. Residues 296-301 (AKKRKK) carry the Nuclear localization signal motif. The span at 304 to 314 (SEALFKSFSSA) shows a compositional bias: low complexity. A compositionally biased stretch (basic and acidic residues) spans 323 to 350 (ADKKQIKDKSHVKMGKVKIESETSEKKK). Lysine 340 participates in a covalent cross-link: Glycyl lysine isopeptide (Lys-Gly) (interchain with G-Cter in SUMO2). Residues 358–369 (DIVDPNDSDVEE) are compositionally biased toward acidic residues. The segment covering 372 to 396 (SSKSDSEQPSPASSSSSSSSSFTPS) has biased composition (low complexity). Phosphoserine occurs at positions 413 and 420. The segment covering 415 to 430 (DNEEESDEAEDNDNDS) has biased composition (acidic residues). Residues 446-462 (VSLSDGSDSESSSASSP) show a composition bias toward low complexity. At serine 484 the chain carries Phosphoserine.

In terms of assembly, component of the super elongation complex (SEC), at least composed of EAF1, EAF2, CDK9, MLLT3/AF9, AFF (AFF1 or AFF4), the P-TEFb complex and ELL (ELL, ELL2 or ELL3). Interacts with BCOR. Interacts with CBX8. Interacts with ALKBH4. Ubiquitously expressed. Strong expression in the spleen.

Its subcellular location is the nucleus. It localises to the chromosome. Chromatin reader component of the super elongation complex (SEC), a complex required to increase the catalytic rate of RNA polymerase II transcription by suppressing transient pausing by the polymerase at multiple sites along the DNA. Specifically recognizes and binds acylated histone H3, with a preference for histone H3 that is crotonylated. Crotonylation marks active promoters and enhancers and confers resistance to transcriptional repressors. Recognizes and binds histone H3 crotonylated at 'Lys-9' (H3K9cr), and with slightly lower affinity histone H3 crotonylated at 'Lys-18' (H3K18cr). Also recognizes and binds histone H3 acetylated and butyrylated at 'Lys-9' (H3K9ac and H3K9bu, respectively), but with lower affinity than crotonylated histone H3. In the SEC complex, MLLT3 is required to recruit the complex to crotonylated histones. Recruitment of the SEC complex to crotonylated histones promotes recruitment of DOT1L on active chromatin to deposit histone H3 'Lys-79' methylation (H3K79me). Plays a key role in hematopoietic stem cell (HSC) maintenance by preserving, rather than conferring, HSC stemness. Acts by binding to the transcription start site of active genes in HSCs and sustaining level of H3K79me2, probably by recruiting DOT1L. This Mus musculus (Mouse) protein is Protein AF-9 (Mllt3).